The primary structure comprises 258 residues: Tryptophan synthase alpha chain (258 aa).

Active-site proton acceptor residues include glutamate 52 and aspartate 63.

It belongs to the TrpA family. As to quaternary structure, tetramer of two alpha and two beta chains.

The enzyme catalyses (1S,2R)-1-C-(indol-3-yl)glycerol 3-phosphate + L-serine = D-glyceraldehyde 3-phosphate + L-tryptophan + H2O. The protein operates within amino-acid biosynthesis; L-tryptophan biosynthesis; L-tryptophan from chorismate: step 5/5. In terms of biological role, the alpha subunit is responsible for the aldol cleavage of indoleglycerol phosphate to indole and glyceraldehyde 3-phosphate. This Streptococcus pneumoniae (strain JJA) protein is Tryptophan synthase alpha chain.